The chain runs to 208 residues: Calcyphosin-like protein (208 aa).

4 consecutive EF-hand domains span residues 39–74, 75–110, 111–146, and 154–191; these read AGIK…YAVV, MEKE…PMSR, ARKE…KHHP, and TEEQ…VSAS. The Ca(2+) site is built by D52, N54, N56, T58, E63, D88, D90, S92, T94, and E99.

Its subcellular location is the cytoplasm. The chain is Calcyphosin-like protein (Capsl) from Mus musculus (Mouse).